Reading from the N-terminus, the 155-residue chain is 6,7-dimethyl-8-ribityllumazine synthase (155 aa).

5-amino-6-(D-ribitylamino)uracil contacts are provided by residues Phe22, 57–59 (AVE), and 81–83 (TVI). (2S)-2-hydroxy-3-oxobutyl phosphate is bound at residue 86–87 (GT). His89 serves as the catalytic Proton donor. Phe114 is a 5-amino-6-(D-ribitylamino)uracil binding site. A (2S)-2-hydroxy-3-oxobutyl phosphate-binding site is contributed by Arg128.

Belongs to the DMRL synthase family. In terms of assembly, forms an icosahedral capsid composed of 60 subunits, arranged as a dodecamer of pentamers.

The catalysed reaction is (2S)-2-hydroxy-3-oxobutyl phosphate + 5-amino-6-(D-ribitylamino)uracil = 6,7-dimethyl-8-(1-D-ribityl)lumazine + phosphate + 2 H2O + H(+). Its pathway is cofactor biosynthesis; riboflavin biosynthesis; riboflavin from 2-hydroxy-3-oxobutyl phosphate and 5-amino-6-(D-ribitylamino)uracil: step 1/2. Its function is as follows. Catalyzes the formation of 6,7-dimethyl-8-ribityllumazine by condensation of 5-amino-6-(D-ribitylamino)uracil with 3,4-dihydroxy-2-butanone 4-phosphate. This is the penultimate step in the biosynthesis of riboflavin. This is 6,7-dimethyl-8-ribityllumazine synthase from Psychromonas ingrahamii (strain DSM 17664 / CCUG 51855 / 37).